A 1366-amino-acid polypeptide reads, in one-letter code: ABC multidrug transporter MDR2 (1366 aa).

The helical transmembrane segment at 52 to 72 threads the bilayer; that stretch reads IALIVIGTIAGIGAGIPFPLL. Positions 56–354 constitute an ABC transmembrane type-1 1 domain; the sequence is VIGTIAGIGA…MAPFMHIFAS (299 aa). An N-linked (GlcNAc...) asparagine glycan is attached at asparagine 84. The next 5 membrane-spanning stretches (helical) occupy residues 106 to 126, 180 to 200, 202 to 222, 288 to 308, and 323 to 343; these read VLQV…HTGC, KVGL…VAFL, VATI…MAFG, IQFG…FWQG, and VSVG…FVLS. The ABC transporter 1 domain maps to 390–669; the sequence is IELQDVTFNY…DGVYAGMVRL (280 aa). 425–432 is an ATP binding site; that stretch reads GTSGSGKS. Asparagine 620 carries an N-linked (GlcNAc...) asparagine glycan. A disordered region spans residues 727–746; it reads PEEADSLPTEPEAKKEKPKQ. The next 4 membrane-spanning stretches (helical) occupy residues 768–788, 807–827, 868–888, and 898–918; these read LGLI…VIFG, GMLF…AVIV, LLVA…GTTI, and LFAG…VLLA. The 288-residue stretch at 768-1055 folds into the ABC transmembrane type-1 2 domain; that stretch reads LGLITSIMIG…MFALVPDISK (288 aa). The N-linked (GlcNAc...) asparagine glycan is linked to asparagine 976. A run of 2 helical transmembrane segments spans residues 995-1015 and 1019-1039; these read FWLS…YWWG and ILAG…LLFS. The 240-residue stretch at 1122 to 1361 folds into the ABC transporter 2 domain; the sequence is VQFRNVHFRY…CESYRANVIH (240 aa). 1157–1164 lines the ATP pocket; the sequence is GPSGSGKS.

It belongs to the ABC transporter superfamily. ABCB family. Multidrug resistance exporter (TC 3.A.1.201) subfamily.

The protein localises to the cell membrane. In terms of biological role, pleiotropic ABC efflux transporter that may be involved in the modulation susceptibility to a wide range of unrelated cytotoxic compounds. Does not act as an efflux pump for azoles, including fluconazole, itraconazole, ketoconazole, miconazole and voriconazole, nor does it modulate susceptibility to cycloheximide. This chain is ABC multidrug transporter MDR2, found in Trichophyton rubrum (strain ATCC MYA-4607 / CBS 118892) (Athlete's foot fungus).